The primary structure comprises 333 residues: Phosphate acyltransferase (333 aa).

It belongs to the PlsX family. In terms of assembly, homodimer. Probably interacts with PlsY.

It localises to the cytoplasm. It catalyses the reaction a fatty acyl-[ACP] + phosphate = an acyl phosphate + holo-[ACP]. It participates in lipid metabolism; phospholipid metabolism. Its function is as follows. Catalyzes the reversible formation of acyl-phosphate (acyl-PO(4)) from acyl-[acyl-carrier-protein] (acyl-ACP). This enzyme utilizes acyl-ACP as fatty acyl donor, but not acyl-CoA. In Helicobacter hepaticus (strain ATCC 51449 / 3B1), this protein is Phosphate acyltransferase.